The chain runs to 75 residues: Sec-independent protein translocase protein TatA (75 aa).

The chain crosses the membrane as a helical span at residues 1-21 (MGSFSIWHWLIVLVIVALVFG). Positions 44–75 (KDANSDKPAEQVTQQKVADDTIDVQAKEKTNS) are disordered.

Belongs to the TatA/E family. In terms of assembly, the Tat system comprises two distinct complexes: a TatABC complex, containing multiple copies of TatA, TatB and TatC subunits, and a separate TatA complex, containing only TatA subunits. Substrates initially bind to the TatABC complex, which probably triggers association of the separate TatA complex to form the active translocon.

It localises to the cell inner membrane. Part of the twin-arginine translocation (Tat) system that transports large folded proteins containing a characteristic twin-arginine motif in their signal peptide across membranes. TatA could form the protein-conducting channel of the Tat system. This chain is Sec-independent protein translocase protein TatA, found in Bordetella petrii (strain ATCC BAA-461 / DSM 12804 / CCUG 43448).